Consider the following 296-residue polypeptide: tRNA uridine(34) hydroxylase (296 aa).

One can recognise a Rhodanese domain in the interval 130–225 (RGDDVVFFDG…YGEAYGNDGY (96 aa)). Cys185 acts as the Cysteine persulfide intermediate in catalysis.

The protein belongs to the TrhO family.

The catalysed reaction is uridine(34) in tRNA + AH2 + O2 = 5-hydroxyuridine(34) in tRNA + A + H2O. Its function is as follows. Catalyzes oxygen-dependent 5-hydroxyuridine (ho5U) modification at position 34 in tRNAs. The polypeptide is tRNA uridine(34) hydroxylase (Corynebacterium kroppenstedtii (strain DSM 44385 / JCM 11950 / CIP 105744 / CCUG 35717)).